Consider the following 238-residue polypeptide: Aspartate/glutamate leucyltransferase (238 aa).

Belongs to the R-transferase family. Bpt subfamily.

It is found in the cytoplasm. The enzyme catalyses N-terminal L-glutamyl-[protein] + L-leucyl-tRNA(Leu) = N-terminal L-leucyl-L-glutamyl-[protein] + tRNA(Leu) + H(+). It catalyses the reaction N-terminal L-aspartyl-[protein] + L-leucyl-tRNA(Leu) = N-terminal L-leucyl-L-aspartyl-[protein] + tRNA(Leu) + H(+). In terms of biological role, functions in the N-end rule pathway of protein degradation where it conjugates Leu from its aminoacyl-tRNA to the N-termini of proteins containing an N-terminal aspartate or glutamate. In Aeromonas salmonicida (strain A449), this protein is Aspartate/glutamate leucyltransferase.